A 455-amino-acid chain; its full sequence is La-related protein 6C (455 aa).

Residues 1–20 (MAQMQREEVESVTTEKKRLD) are compositionally biased toward basic and acidic residues. The disordered stretch occupies residues 1-29 (MAQMQREEVESVTTEKKRLDGGGGSSGAQ). Residues 138-229 (NLLSDDLRLK…KRTSQFTDRD (92 aa)) form the HTH La-type RNA-binding domain. Positions 236–324 (RTVVAENLPD…KGLRVRLLLR (89 aa)) constitute an RRM domain. 2 disordered regions span residues 348–396 (SYES…YAVG) and 414–455 (SLGS…PNNL).

The protein localises to the nucleus. Functionally, transcriptional regulator. In Arabidopsis thaliana (Mouse-ear cress), this protein is La-related protein 6C (LARP6C).